Here is a 311-residue protein sequence, read N- to C-terminus: Methionyl-tRNA formyltransferase (311 aa).

Ser109–Pro112 provides a ligand contact to (6S)-5,6,7,8-tetrahydrofolate.

Belongs to the Fmt family.

The enzyme catalyses L-methionyl-tRNA(fMet) + (6R)-10-formyltetrahydrofolate = N-formyl-L-methionyl-tRNA(fMet) + (6S)-5,6,7,8-tetrahydrofolate + H(+). Functionally, attaches a formyl group to the free amino group of methionyl-tRNA(fMet). The formyl group appears to play a dual role in the initiator identity of N-formylmethionyl-tRNA by promoting its recognition by IF2 and preventing the misappropriation of this tRNA by the elongation apparatus. The polypeptide is Methionyl-tRNA formyltransferase (Marinobacter nauticus (strain ATCC 700491 / DSM 11845 / VT8) (Marinobacter aquaeolei)).